We begin with the raw amino-acid sequence, 296 residues long: Immediate early response gene 5-like protein (296 aa).

This sequence belongs to the IER family.

The protein is Immediate early response gene 5-like protein (ier5l) of Xenopus tropicalis (Western clawed frog).